Here is a 692-residue protein sequence, read N- to C-terminus: Ribosome-releasing factor 2, mitochondrial (692 aa).

Residues 1–29 constitute a mitochondrion transit peptide; sequence MLKYAWQSGPKQRNRWLWHLSNQIWKRSY. Positions 31 to 310 constitute a tr-type G domain; it reads SKIRNIGILA…AVNAYLPAPE (280 aa). GTP-binding positions include 40-47, 104-108, and 158-161; these read AHIDAGKT, DTPGH, and NKMD.

This sequence belongs to the TRAFAC class translation factor GTPase superfamily. Classic translation factor GTPase family. EF-G/EF-2 subfamily.

It localises to the mitochondrion. Functionally, mitochondrial GTPase that mediates the disassembly of ribosomes from messenger RNA at the termination of mitochondrial protein biosynthesis. Not involved in the GTP-dependent ribosomal translocation step during translation elongation. The sequence is that of Ribosome-releasing factor 2, mitochondrial from Drosophila sechellia (Fruit fly).